Reading from the N-terminus, the 860-residue chain is Beta-glucosidase A (860 aa).

Positions 1 to 19 (MRFTLIEAVALTAVSLASA) are cleaved as a signal peptide. N-linked (GlcNAc...) asparagine glycans are attached at residues Asn61, Asn211, and Asn252. Asp280 is a catalytic residue. Asn315, Asn322, Asn354, Asn387, Asn442, Asn523, Asn542, Asn564, Asn658, Asn690, and Asn712 each carry an N-linked (GlcNAc...) asparagine glycan. Positions 719–753 (SSGDASYGQDSSDYLPEGATDGSAQPILPAGGGPG) are disordered.

It belongs to the glycosyl hydrolase 3 family.

It localises to the secreted. It catalyses the reaction Hydrolysis of terminal, non-reducing beta-D-glucosyl residues with release of beta-D-glucose.. It functions in the pathway glycan metabolism; cellulose degradation. In terms of biological role, beta-glucosidases are one of a number of cellulolytic enzymes involved in the degradation of cellulosic biomass. Catalyzes the last step releasing glucose from the inhibitory cellobiose. The polypeptide is Beta-glucosidase A (bglA) (Aspergillus kawachii (strain NBRC 4308) (White koji mold)).